A 90-amino-acid chain; its full sequence is uncharacterized protein (90 aa).

It localises to the cytoplasm. This is an uncharacterized protein from Saccharomyces cerevisiae (strain ATCC 204508 / S288c) (Baker's yeast).